Here is a 542-residue protein sequence, read N- to C-terminus: Ribulokinase 2 (542 aa).

Belongs to the ribulokinase family.

The catalysed reaction is D-ribulose + ATP = D-ribulose 5-phosphate + ADP + H(+). The enzyme catalyses L-ribulose + ATP = L-ribulose 5-phosphate + ADP + H(+). It participates in carbohydrate degradation; L-arabinose degradation via L-ribulose; D-xylulose 5-phosphate from L-arabinose (bacterial route): step 2/3. This chain is Ribulokinase 2, found in Staphylococcus saprophyticus subsp. saprophyticus (strain ATCC 15305 / DSM 20229 / NCIMB 8711 / NCTC 7292 / S-41).